A 193-amino-acid chain; its full sequence is dTTP/UTP pyrophosphatase (193 aa).

Residue Asp71 is the Proton acceptor of the active site.

The protein belongs to the Maf family. YhdE subfamily. A divalent metal cation is required as a cofactor.

Its subcellular location is the cytoplasm. The enzyme catalyses dTTP + H2O = dTMP + diphosphate + H(+). The catalysed reaction is UTP + H2O = UMP + diphosphate + H(+). Its function is as follows. Nucleoside triphosphate pyrophosphatase that hydrolyzes dTTP and UTP. May have a dual role in cell division arrest and in preventing the incorporation of modified nucleotides into cellular nucleic acids. The protein is dTTP/UTP pyrophosphatase of Geobacter sp. (strain M21).